Reading from the N-terminus, the 217-residue chain is Pyridoxine/pyridoxamine 5'-phosphate oxidase (217 aa).

Residues 13–16 (RREY) and Lys71 contribute to the substrate site. FMN is bound by residues 66–71 (RIVLLK), 81–82 (YT), Arg87, Lys88, and Gln110. Tyr128, Arg132, and Ser136 together coordinate substrate. FMN-binding positions include 145–146 (QS) and Trp190. Residue 196–198 (RLH) coordinates substrate. Residue Arg200 participates in FMN binding.

Belongs to the pyridoxamine 5'-phosphate oxidase family. As to quaternary structure, homodimer. It depends on FMN as a cofactor.

It carries out the reaction pyridoxamine 5'-phosphate + O2 + H2O = pyridoxal 5'-phosphate + H2O2 + NH4(+). The enzyme catalyses pyridoxine 5'-phosphate + O2 = pyridoxal 5'-phosphate + H2O2. Its pathway is cofactor metabolism; pyridoxal 5'-phosphate salvage; pyridoxal 5'-phosphate from pyridoxamine 5'-phosphate: step 1/1. It functions in the pathway cofactor metabolism; pyridoxal 5'-phosphate salvage; pyridoxal 5'-phosphate from pyridoxine 5'-phosphate: step 1/1. Functionally, catalyzes the oxidation of either pyridoxine 5'-phosphate (PNP) or pyridoxamine 5'-phosphate (PMP) into pyridoxal 5'-phosphate (PLP). In Serratia proteamaculans (strain 568), this protein is Pyridoxine/pyridoxamine 5'-phosphate oxidase.